The chain runs to 962 residues: Putative RNA Helicase B962L (962 aa).

The Helicase ATP-binding domain occupies 43–229; that stretch reads IPTSLADRVL…FGIGKENIIL (187 aa). Position 56-63 (56-63) interacts with ATP; that stretch reads SRTGSGKS. The DEAH box signature appears at 167–170; the sequence is DEAH. The Helicase C-terminal domain maps to 253 to 459; sequence ACETALTIHK…TIKKNKEGVF (207 aa). A helical transmembrane segment spans residues 521 to 541; that stretch reads GYFWQAAISDIATILAVVSVA.

The protein belongs to the DEAD box helicase family. DEAH subfamily.

It is found in the host membrane. The protein resides in the virion. It carries out the reaction ATP + H2O = ADP + phosphate + H(+). The polypeptide is Putative RNA Helicase B962L (African swine fever virus (isolate Tick/South Africa/Pretoriuskop Pr4/1996) (ASFV)).